The chain runs to 68 residues: Beta-defensin 1 (68 aa).

A signal peptide spans 1–21 (MRTSYLLLFTLCLLLSEMASG). Positions 22-32 (DNFLTGLGHRS) are excised as a propeptide. 3 disulfide bridges follow: Cys-37-Cys-66, Cys-44-Cys-59, and Cys-49-Cys-67.

The protein belongs to the beta-defensin family. In terms of assembly, monomer. Homodimer.

The protein localises to the secreted. It localises to the membrane. Its function is as follows. Has bactericidal activity. May act as a ligand for C-C chemokine receptor CCR6. Positively regulates the sperm motility and bactericidal activity in a CCR6-dependent manner. Binds to CCR6 and triggers Ca2+ mobilization in the sperm which is important for its motility. In Hylobates moloch (Silvery gibbon), this protein is Beta-defensin 1 (DEFB1).